Here is a 207-residue protein sequence, read N- to C-terminus: Cytochrome c biogenesis ATP-binding export protein CcmA (207 aa).

The ABC transporter domain occupies 4-207 (LEARELLCER…RISLTQTGAA (204 aa)). 36 to 43 (GSNGAGKT) is a binding site for ATP.

This sequence belongs to the ABC transporter superfamily. CcmA exporter (TC 3.A.1.107) family. The complex is composed of two ATP-binding proteins (CcmA) and two transmembrane proteins (CcmB).

The protein resides in the cell inner membrane. It catalyses the reaction heme b(in) + ATP + H2O = heme b(out) + ADP + phosphate + H(+). Its function is as follows. Part of the ABC transporter complex CcmAB involved in the biogenesis of c-type cytochromes; once thought to export heme, this seems not to be the case, but its exact role is uncertain. Responsible for energy coupling to the transport system. This is Cytochrome c biogenesis ATP-binding export protein CcmA from Escherichia coli (strain UTI89 / UPEC).